We begin with the raw amino-acid sequence, 153 residues long: Ribosome maturation factor RimP (153 aa).

The protein belongs to the RimP family.

It localises to the cytoplasm. In terms of biological role, required for maturation of 30S ribosomal subunits. The chain is Ribosome maturation factor RimP from Picosynechococcus sp. (strain ATCC 27264 / PCC 7002 / PR-6) (Agmenellum quadruplicatum).